A 124-amino-acid polypeptide reads, in one-letter code: uncharacterized protein (124 aa).

The next 3 helical transmembrane spans lie at 14 to 34 (KAIVIESLLLVVFYLLIYGWQ), 41 to 61 (FSYGFLSAFLPFCTFIFIIFY), and 85 to 105 (MVFIIIAIKWLFVINFIAFFV).

It is found in the cell membrane. This is an uncharacterized protein from Haemophilus influenzae (strain ATCC 51907 / DSM 11121 / KW20 / Rd).